Reading from the N-terminus, the 689-residue chain is Glycine--tRNA ligase beta subunit (689 aa).

The protein belongs to the class-II aminoacyl-tRNA synthetase family. In terms of assembly, tetramer of two alpha and two beta subunits.

It localises to the cytoplasm. The enzyme catalyses tRNA(Gly) + glycine + ATP = glycyl-tRNA(Gly) + AMP + diphosphate. In Glaesserella parasuis serovar 5 (strain SH0165) (Haemophilus parasuis), this protein is Glycine--tRNA ligase beta subunit.